We begin with the raw amino-acid sequence, 26 residues long: MALKAVCVLKGAGETSGTVHFEQEDN.

C7 carries the S-palmitoyl cysteine lipid modification.

The protein belongs to the Cu-Zn superoxide dismutase family. Homotrimer. Requires Cu cation as cofactor. Zn(2+) serves as cofactor.

It is found in the cytoplasm. Its subcellular location is the nucleus. It carries out the reaction 2 superoxide + 2 H(+) = H2O2 + O2. Destroys radicals which are normally produced within the cells and which are toxic to biological systems. The chain is Superoxide dismutase [Cu-Zn] (sod1) from Paralichthys olivaceus (Bastard halibut).